The sequence spans 96 residues: Putative pterin-4-alpha-carbinolamine dehydratase (96 aa).

Belongs to the pterin-4-alpha-carbinolamine dehydratase family.

It carries out the reaction (4aS,6R)-4a-hydroxy-L-erythro-5,6,7,8-tetrahydrobiopterin = (6R)-L-erythro-6,7-dihydrobiopterin + H2O. This Metallosphaera sedula (strain ATCC 51363 / DSM 5348 / JCM 9185 / NBRC 15509 / TH2) protein is Putative pterin-4-alpha-carbinolamine dehydratase.